We begin with the raw amino-acid sequence, 413 residues long: uncharacterized protein (413 aa).

This is an uncharacterized protein from Mycoplasma pneumoniae (strain ATCC 29342 / M129 / Subtype 1) (Mycoplasmoides pneumoniae).